A 622-amino-acid chain; its full sequence is Dehydrogenase mpl7 (622 aa).

FAD is bound by residues 23 to 24 (TA), 44 to 45 (EA), and 102 to 105 (NFMS). His-554 functions as the Proton acceptor in the catalytic mechanism. FAD-binding positions include Ala-582 and 593–594 (IM).

This sequence belongs to the GMC oxidoreductase family. In terms of assembly, homodimer. It depends on FAD as a cofactor.

It functions in the pathway mycotoxin biosynthesis. Its function is as follows. Dehydrogenase; part of the gene cluster that mediates the biosynthesis of the mycotoxin citrinin, a hepato-nephrotoxic compound to humans due to inhibition of respiration complex III. The pathway begins with the synthesis of a keto-aldehyde intermediate by the citrinin PKS (pksCT) from successive condensations of 4 malonyl-CoA units, presumably with a simple acetyl-CoA starter unit. Release of the keto-aldehyde intermediate is consistent with the presence of the C-terminal reductive release domain. Mp11 collaborates with pksCT by catalyzing the hydrolysis of ACP-bound acyl intermediates to free the ACP from stalled intermediates. Mpl2 then catalyzes the oxidation of the C-12 methyl of the ketone intermediate to an alcohol intermediate which is further oxidized by the oxidoreductase mpl7 to produce a bisaldehyde intermediate. The fourth catalytic step is catalyzed by the mpl4 aldehyde dehydrogenase. The final transformation is the reduction of C-3 by mpl6 to provide the chemically stable citrinin nucleus. This Monascus purpureus (Red mold) protein is Dehydrogenase mpl7.